Here is a 504-residue protein sequence, read N- to C-terminus: Light-independent protochlorophyllide reductase subunit B (504 aa).

Residue Asp36 coordinates [4Fe-4S] cluster. Asp279 serves as the catalytic Proton donor. Residue Gly414–Leu415 participates in substrate binding.

This sequence belongs to the ChlB/BchB/BchZ family. Protochlorophyllide reductase is composed of three subunits; BchL, BchN and BchB. Forms a heterotetramer of two BchB and two BchN subunits. [4Fe-4S] cluster is required as a cofactor.

The enzyme catalyses chlorophyllide a + oxidized 2[4Fe-4S]-[ferredoxin] + 2 ADP + 2 phosphate = protochlorophyllide a + reduced 2[4Fe-4S]-[ferredoxin] + 2 ATP + 2 H2O. The protein operates within porphyrin-containing compound metabolism; bacteriochlorophyll biosynthesis (light-independent). Functionally, component of the dark-operative protochlorophyllide reductase (DPOR) that uses Mg-ATP and reduced ferredoxin to reduce ring D of protochlorophyllide (Pchlide) to form chlorophyllide a (Chlide). This reaction is light-independent. The NB-protein (BchN-BchB) is the catalytic component of the complex. This is Light-independent protochlorophyllide reductase subunit B from Acidiphilium rubrum.